The following is a 213-amino-acid chain: Histone H1.1 (213 aa).

A disordered region spans residues 1 to 43 (MSETAPVAQAASTATEKPAAAKKTKKPAKAAAPRKKPAGPSVS). At Ser-2 the chain carries N-acetylserine. Ser-2 and Ser-12 each carry phosphoserine. Over residues 8-18 (AQAASTATEKP) the composition is skewed to low complexity. Lys-17 is subject to N6-acetyllysine. Residues 20–37 (AAKKTKKPAKAAAPRKKP) are compositionally biased toward basic residues. Position 36 is an N6-(beta-hydroxybutyryl)lysine (Lys-36). The region spanning 38–111 (AGPSVSELIV…GAAGSFKLNK (74 aa)) is the H15 domain. Ser-43 bears the Phosphoserine mark. At Lys-54 the chain carries N6-(beta-hydroxybutyryl)lysine. Arg-56 carries the citrulline modification. Lys-66 is modified (N6-(beta-hydroxybutyryl)lysine). Ser-67 carries the phosphoserine modification. Lys-77 is subject to N6-acetyllysine. Residue Lys-87 is modified to N6-(beta-hydroxybutyryl)lysine. N6-(beta-hydroxybutyryl)lysine; alternate is present on Lys-92. Lys-92 carries the post-translational modification N6-acetyllysine; alternate. The residue at position 106 (Ser-106) is a Phosphoserine. Lys-108 carries the N6-(beta-hydroxybutyryl)lysine modification. A disordered region spans residues 112-213 (KAESKAITTK…KPKKAAPKKK (102 aa)). The span at 120 to 144 (TKVSVKAKASGAAKKPKKTAGAAAK) shows a compositional bias: low complexity. Lys-121 carries the post-translational modification N6-acetyllysine. Basic residues-rich tracts occupy residues 145–178 (KTVKTPKKPKKPAVSKKTSKSPKKPKVVKAKKVA) and 185–213 (KAVKPKASKAKVTKPKTPAKPKKAAPKKK). Phosphothreonine is present on Thr-201.

The protein belongs to the histone H1/H5 family. As to quaternary structure, interacts with DFFB. Post-translationally, H1 histones are progressively phosphorylated during the cell cycle, becoming maximally phosphorylated during late G2 phase and M phase, and being dephosphorylated sharply thereafter. Citrullination at Arg-56 (H1R54ci) by PADI4 takes place within the DNA-binding site of H1 and results in its displacement from chromatin and global chromatin decondensation, thereby promoting pluripotency and stem cell maintenance. In terms of processing, hydroxybutyrylation of histones is induced by starvation. In terms of tissue distribution, restricted to thymus, testis and spleen. Present also in lymphocytic and neuronal cells. Increases in testis starting with a low level at day 5 and reaching high concentrations in 20-day old and adult animals.

The protein localises to the nucleus. It localises to the chromosome. Its function is as follows. Histone H1 protein binds to linker DNA between nucleosomes forming the macromolecular structure known as the chromatin fiber. Histones H1 are necessary for the condensation of nucleosome chains into higher-order structured fibers. Also acts as a regulator of individual gene transcription through chromatin remodeling, nucleosome spacing and DNA methylation. The polypeptide is Histone H1.1 (Mus musculus (Mouse)).